The following is a 601-amino-acid chain: ATP-dependent lipid A-core flippase (601 aa).

An ABC transmembrane type-1 domain is found at 28-328 (LLSVVGLIVY…LTRVNAEFQR (301 aa)). Helical transmembrane passes span 32-52 (VGLI…GPFI), 81-101 (VLLM…FANF), 160-180 (ALIS…LMFY), 183-203 (WKLS…ITIV), 267-287 (AVSQ…VLYA), and 296-316 (DLTA…LQPI). The ABC transporter domain maps to 360–597 (LRFDNVSFSY…GGMYAKLYQM (238 aa)). Residue 394 to 401 (GRSGSGKS) coordinates ATP.

It belongs to the ABC transporter superfamily. Lipid exporter (TC 3.A.1.106) family. In terms of assembly, homodimer.

The protein resides in the cell inner membrane. The catalysed reaction is ATP + H2O + lipid A-core oligosaccharideSide 1 = ADP + phosphate + lipid A-core oligosaccharideSide 2.. Functionally, involved in lipopolysaccharide (LPS) biosynthesis. Translocates lipid A-core from the inner to the outer leaflet of the inner membrane. Transmembrane domains (TMD) form a pore in the inner membrane and the ATP-binding domain (NBD) is responsible for energy generation. This chain is ATP-dependent lipid A-core flippase, found in Shewanella oneidensis (strain ATCC 700550 / JCM 31522 / CIP 106686 / LMG 19005 / NCIMB 14063 / MR-1).